Consider the following 247-residue polypeptide: Virulence plasmid protein pGP6-D (247 aa).

The protein belongs to the UPF0137 (pGP6-D) family.

This Chlamydia trachomatis protein is Virulence plasmid protein pGP6-D.